The following is a 269-amino-acid chain: MSAGQRPAPKFPLRLDQVKPAGRSGAAPLLRPQRPLHQAATERGRGTTPAGLGLDSHLVRERMLARLQAEGVRDARVLAAMRAVPRHSFVDTALANQAYEDTSLPIGLGQTISKPSVVARMIELMLALQPAGARPRLLEIGSGCGYQAAVLAQLARQVVSIERLRPLYDKARENLAPLNFGNLRLVYGDGRIGHAPNAPYDGIIAAAGGEDIPQPWIDQLGPGGRLVAPMLDARSGGQVLVVIDRHADGNLVRSLHEAVRFVPLKSGTD.

A disordered region spans residues 1–53; it reads MSAGQRPAPKFPLRLDQVKPAGRSGAAPLLRPQRPLHQAATERGRGTTPAGLG. S113 is a catalytic residue.

The protein belongs to the methyltransferase superfamily. L-isoaspartyl/D-aspartyl protein methyltransferase family.

The protein localises to the cytoplasm. It carries out the reaction [protein]-L-isoaspartate + S-adenosyl-L-methionine = [protein]-L-isoaspartate alpha-methyl ester + S-adenosyl-L-homocysteine. Functionally, catalyzes the methyl esterification of L-isoaspartyl residues in peptides and proteins that result from spontaneous decomposition of normal L-aspartyl and L-asparaginyl residues. It plays a role in the repair and/or degradation of damaged proteins. The protein is Protein-L-isoaspartate O-methyltransferase of Methylibium petroleiphilum (strain ATCC BAA-1232 / LMG 22953 / PM1).